The primary structure comprises 436 residues: Succinyl-CoA:glutarate CoA-transferase (436 aa).

Residues 1–8 constitute a mitochondrion transit peptide; the sequence is MLWMLARA. Catalysis depends on D203, which acts as the Nucleophile. N6-acetyllysine occurs at positions 392 and 423.

It belongs to the CoA-transferase III family.

The protein resides in the mitochondrion. It catalyses the reaction glutarate + succinyl-CoA = glutaryl-CoA + succinate. The catalysed reaction is 3-hydroxy-3-methylglutarate + succinyl-CoA = (3S)-3-hydroxy-3-methylglutaryl-CoA + succinate. The enzyme catalyses 3-hydroxy-3-methylglutarate + glutaryl-CoA = (3S)-3-hydroxy-3-methylglutaryl-CoA + glutarate. It carries out the reaction hexanedioate + glutaryl-CoA = hexanedioyl-CoA + glutarate. It catalyses the reaction itaconate + glutaryl-CoA = itaconyl-CoA + glutarate. The catalysed reaction is itaconate + succinyl-CoA = itaconyl-CoA + succinate. In terms of biological role, coenzyme A (CoA) transferase that reversibly catalyzes the transfer of a CoA moiety from a dicarboxyl-CoA to a dicarboxylate in a metabolite recycling process. Displays preference for succinyl-CoA and glutarate-CoA as dicarboxyl-CoA donors and glutarate, succinate, adipate/hexanedioate, itaconate and 3-hydroxy-3-methylglutarate as dicarboxylate acceptors. Acts on intermediates or end products of lysine and tryptophan degradation pathway, in particular catalyzes succinyl-CoA-dependent reesterification of free glutarate into glutaryl-CoA to prevent renal excretion of glutarate. Upon inflammation, may convert macrophage-derived itaconate to itaconyl-CoA in erythroid precursors where it negatively regulates the TCA cycle and heme synthesis to limit erythroid differentiation in the context of stress erythropoiesis. This Mus musculus (Mouse) protein is Succinyl-CoA:glutarate CoA-transferase.